Reading from the N-terminus, the 650-residue chain is Fructose-1,6-bisphosphatase class 3 (650 aa).

It belongs to the FBPase class 3 family. Requires Mn(2+) as cofactor.

It carries out the reaction beta-D-fructose 1,6-bisphosphate + H2O = beta-D-fructose 6-phosphate + phosphate. Its pathway is carbohydrate biosynthesis; gluconeogenesis. The protein is Fructose-1,6-bisphosphatase class 3 of Staphylococcus saprophyticus subsp. saprophyticus (strain ATCC 15305 / DSM 20229 / NCIMB 8711 / NCTC 7292 / S-41).